We begin with the raw amino-acid sequence, 1788 residues long: Glutamine and serine-rich protein 1 (1788 aa).

Over residues 1–53 (MDAHYAPAGFAEPPAPPASAATQPAAPAWAYEARVPAAASSPSCSGSSPSLKA) the composition is skewed to low complexity. Disordered regions lie at residues 1–69 (MDAH…DVLQ), 472–498 (TRDLPSVSESQNYSSGQSQGLSPVSQT), and 532–617 (SYSS…SKQD). 4 stretches are compositionally biased toward polar residues: residues 60–69 (PSQSESDVLQ), 478–492 (VSESQNYSSGQSQGL), 532–569 (SYSSASRGQSLPVSTPTPSYTSMHPSPNAQTQGSSAQP), and 576–594 (VQSSFASSTRGQTLQSSIP). A phosphoserine mark is found at Ser-670 and Ser-940. Position 1003 is a phosphothreonine (Thr-1003). The residue at position 1041 (Ser-1041) is a Phosphoserine. Disordered regions lie at residues 1104 to 1163 (QPGD…TDVY) and 1234 to 1264 (IQTTRTFCPPPFAKTSPAAQAPSETGGVSLS). Lys-1112 participates in a covalent cross-link: Glycyl lysine isopeptide (Lys-Gly) (interchain with G-Cter in SUMO2). Residues 1126–1136 (PKEKAKGKEQG) show a composition bias toward basic and acidic residues. Residue Lys-1137 forms a Glycyl lysine isopeptide (Lys-Gly) (interchain with G-Cter in SUMO2) linkage. Phosphoserine occurs at positions 1262, 1281, and 1282. A Phosphothreonine modification is found at Thr-1394. Phosphoserine is present on Ser-1401. The disordered stretch occupies residues 1494–1588 (VCSKKPRNKP…DEGFEPPAPS (95 aa)). Positions 1510–1537 (IPSKPSSISKTSDPPVSKTTTTKTPSTK) are enriched in low complexity. Positions 1545 to 1561 (IKAEPPPKKRKKWKEEF) are enriched in basic and acidic residues. Low complexity predominate over residues 1562-1575 (SSSQSESSPEVRSS).

As to quaternary structure, interacts with TET1.

The protein resides in the chromosome. Its function is as follows. Plays an essential role in the protection and maintenance of transcriptional and developmental programs. Protects many bivalent promoters and poised enhancers from hypermethylation, showing a marked preference for these regulatory elements over other types of promoters or enhancers. Mechanistically, cooperates with TET1 and binds to DNA in a common complex to inhibit the binding of DNMT3A/3B and therefore de novo methylation. The protein is Glutamine and serine-rich protein 1 of Mus musculus (Mouse).